The sequence spans 327 residues: DNA-directed RNA polymerase subunit alpha (327 aa).

Positions 1-233 are alpha N-terminal domain (alpha-NTD); the sequence is MVREKVKVST…NLFIPFLHVE (233 aa). Residues 267-327 form an alpha C-terminal domain (alpha-CTD) region; that stretch reads LAFQYIFIDQ…KKILDILEKK (61 aa).

The protein belongs to the RNA polymerase alpha chain family. In plastids the minimal PEP RNA polymerase catalytic core is composed of four subunits: alpha, beta, beta', and beta''. When a (nuclear-encoded) sigma factor is associated with the core the holoenzyme is formed, which can initiate transcription.

The protein resides in the plastid. The protein localises to the chloroplast. The enzyme catalyses RNA(n) + a ribonucleoside 5'-triphosphate = RNA(n+1) + diphosphate. Its function is as follows. DNA-dependent RNA polymerase catalyzes the transcription of DNA into RNA using the four ribonucleoside triphosphates as substrates. In Lepidium virginicum (Virginia pepperweed), this protein is DNA-directed RNA polymerase subunit alpha.